Consider the following 686-residue polypeptide: Translation initiation factor IF-2 (686 aa).

The segment at 54 to 105 (KPSVADEFEVEEKVVRSKKNSNKKKKKGKGNEDKRQENFAGRQQTQTVETPD) is disordered. Residues 69-81 (RSKKNSNKKKKKG) show a composition bias toward basic residues. In terms of domain architecture, tr-type G spans 188-357 (ERPAVVTIMG…LLISEVEEYK (170 aa)). The G1 stretch occupies residues 197 to 204 (GHVDHGKT). 197-204 (GHVDHGKT) contacts GTP. Positions 222-226 (GITQH) are G2. The segment at 243-246 (DTPG) is G3. Residues 243–247 (DTPGH) and 297–300 (NKMD) each bind GTP. The tract at residues 297-300 (NKMD) is G4. Residues 333–335 (SAI) are G5.

Belongs to the TRAFAC class translation factor GTPase superfamily. Classic translation factor GTPase family. IF-2 subfamily.

It is found in the cytoplasm. In terms of biological role, one of the essential components for the initiation of protein synthesis. Protects formylmethionyl-tRNA from spontaneous hydrolysis and promotes its binding to the 30S ribosomal subunits. Also involved in the hydrolysis of GTP during the formation of the 70S ribosomal complex. This chain is Translation initiation factor IF-2, found in Bacillus anthracis (strain A0248).